Reading from the N-terminus, the 355-residue chain is Guanine nucleotide-binding protein alpha-2 subunit (355 aa).

Positions 1–20 are disordered; sequence MCFGGRGKDDEAEASRSREL. The 323-residue stretch at 33–355 folds into the G-alpha domain; the sequence is KEVKLLLLGA…IQRNLKQLIL (323 aa). The interval 36–49 is G1 motif; the sequence is KLLLLGAGESGKST. 14 residues coordinate GTP: E44, S45, G46, K47, S48, T49, D151, L176, T182, G204, N270, K271, D273, and A328. S48 contacts Mg(2+). A G2 motif region spans residues 174 to 182; sequence DLLRSRLRT. A Mg(2+)-binding site is contributed by T182. The interval 197 to 206 is G3 motif; it reads YRMFDVGGQR. The segment at 266–273 is G4 motif; sequence ILFLNKID. Residues 326–331 are G5 motif; that stretch reads TNATDT.

This sequence belongs to the G-alpha family. G(q) subfamily. As to quaternary structure, g proteins are composed of 3 units; alpha, beta and gamma. The alpha chain contains the guanine nucleotide binding site. Mg(2+) serves as cofactor.

In terms of biological role, guanine nucleotide-binding proteins (G proteins) are involved as modulators or transducers in various transmembrane signaling systems. The sequence is that of Guanine nucleotide-binding protein alpha-2 subunit (gna-2) from Neurospora crassa (strain ATCC 24698 / 74-OR23-1A / CBS 708.71 / DSM 1257 / FGSC 987).